A 415-amino-acid chain; its full sequence is Polyadenylate-binding protein RBP45C (415 aa).

The segment at 1-77 is disordered; sequence MMQQPPPASN…GGSQNPGSAG (77 aa). A compositionally biased stretch (low complexity) spans 23-64; the sequence is QQAYLQQQQSWMMQHQQQQQGQPPAGWNQQSAPSSGQPQQQQ. RRM domains are found at residues 80–160, 173–252, and 278–350; these read RSLW…WAQL, HTVF…PAAN, and TTIF…WGRS. Residues 344 to 356 show a composition bias toward polar residues; that stretch reads RLSWGRSPSNKQT. The segment at 344-369 is disordered; it reads RLSWGRSPSNKQTQPDQAQYGGGGGY.

It belongs to the polyadenylate-binding RBP45 family. Interacts with the poly(A) tail of mRNA in nucleus. Mostly expressed in seedlings and stems, and, to a lower extent, in leaves and flowers.

The protein localises to the nucleus. Heterogeneous nuclear ribonucleoprotein (hnRNP)-protein binding the poly(A) tail of mRNA and probably involved in some steps of pre-mRNA maturation. This Arabidopsis thaliana (Mouse-ear cress) protein is Polyadenylate-binding protein RBP45C (RBP45C).